The primary structure comprises 129 residues: Large ribosomal subunit protein bL20 (129 aa).

It belongs to the bacterial ribosomal protein bL20 family.

Its function is as follows. Binds directly to 23S ribosomal RNA and is necessary for the in vitro assembly process of the 50S ribosomal subunit. It is not involved in the protein synthesizing functions of that subunit. The chain is Large ribosomal subunit protein bL20 from Mycobacterium sp. (strain JLS).